A 174-amino-acid chain; its full sequence is Large ribosomal subunit protein uL10 (174 aa).

It belongs to the universal ribosomal protein uL10 family. As to quaternary structure, part of the ribosomal stalk of the 50S ribosomal subunit. The N-terminus interacts with L11 and the large rRNA to form the base of the stalk. The C-terminus forms an elongated spine to which L12 dimers bind in a sequential fashion forming a multimeric L10(L12)X complex.

Functionally, forms part of the ribosomal stalk, playing a central role in the interaction of the ribosome with GTP-bound translation factors. The sequence is that of Large ribosomal subunit protein uL10 from Bordetella bronchiseptica (strain ATCC BAA-588 / NCTC 13252 / RB50) (Alcaligenes bronchisepticus).